A 94-amino-acid polypeptide reads, in one-letter code: UPF0358 protein Bcer98_2651 (94 aa).

It belongs to the UPF0358 family.

The chain is UPF0358 protein Bcer98_2651 from Bacillus cytotoxicus (strain DSM 22905 / CIP 110041 / 391-98 / NVH 391-98).